The following is a 227-amino-acid chain: UPF0173 metal-dependent hydrolase Bsph_4138 (227 aa).

This sequence belongs to the UPF0173 family.

In Lysinibacillus sphaericus (strain C3-41), this protein is UPF0173 metal-dependent hydrolase Bsph_4138.